The primary structure comprises 404 residues: 6-hydroxytryptophan 2,3-dioxygenase fscD (404 aa).

Histidine 341 is a heme b binding site.

Belongs to the indoleamine 2,3-dioxygenase family. It depends on heme as a cofactor.

The protein operates within secondary metabolite biosynthesis. Functionally, 6-hydroxytryptophan 2,3-dioxygenase; part of the fragmented gene cluster that mediates the biosynthesis of fusarochromene, a tryptophan-derived metabolite closely related to a group of mycotoxins including fusarochromanone. Within the pathway, fscD is responsible of the cleavage of the pyrrole ring of 6-hydroxytryptophan. The first step of the pathway is the epimerization of L-tryptophan to D-tryptophan in the presence of the NRPS-like tryptophan epimerase fscC. D-tryptophan is subsequently hydroxylated by the tryptophan 6-hydroxylase fscE to yield 6-hydroxytryptophan. The pyrrole ring undergoes cleavaged by the tryptophan 2,3-dioxygenase fscD and is finally converted to 4-hydroxykyrunenine by the hydrolase fscH. The NRPS-like oxidoreductase fscA reduces the carboxyl group to primary alcohol and the DMATS-type prenyltransferase fscG performs prenylation, followed by the formation of a chromene ring catalyzed by the oxidoreductase fscI, which leads to desacetylfusarochromene. Epoxidation by fscF and rearrangement reactions of chromene double bonds convert compound desacetylfusarochromene to fusarochromanones. Although specific acetyltransferases were not found near the fsc gene cluster, several predicted enzymes containing the N-acetyltransferase superfamily domain are present in the genome of F.equiseti. These predicted enzymes may have the potential to convert desacetylfusarochromene to fusarochromene. In Fusarium equiseti (Fusarium scirpi), this protein is 6-hydroxytryptophan 2,3-dioxygenase fscD.